The primary structure comprises 365 residues: Spermidine-binding periplasmic protein SpuE (365 aa).

The N-terminal stretch at 1-24 (MQHSIGKTLLVAALATAIAGPVQA) is a signal peptide. Residues Thr35, Glu181, Asp242, and Asn269 each contribute to the spermidine site.

It belongs to the bacterial solute-binding protein PotD/PotF family.

The protein resides in the periplasm. Functionally, spermidine-binding protein probably required for its uptake into cells. Binds spermidine with high affinity (KD=14.3 nM). Does not bind putrescine, cadaverine or spermine. Spermidine binding induces large inter-domain conformational changes. Implicated in induction of type 3 secretion systems (T3SS), which play a role in virulence. The protein is Spermidine-binding periplasmic protein SpuE (spuE) of Pseudomonas aeruginosa (strain ATCC 15692 / DSM 22644 / CIP 104116 / JCM 14847 / LMG 12228 / 1C / PRS 101 / PAO1).